Reading from the N-terminus, the 426-residue chain is ATP-dependent Clp protease ATP-binding subunit ClpX (426 aa).

The 52-residue stretch at 1–52 (MNEIKKRCSFCNKEESLDNPIINSGITPDVYICNYCLIVGSEILTGYLNKNP) folds into the ClpX-type ZB domain. Zn(2+) is bound by residues Cys-8, Cys-11, Cys-33, and Cys-36. An ATP-binding site is contributed by 129-136 (PTGSGKTL).

The protein belongs to the ClpX chaperone family. As to quaternary structure, component of the ClpX-ClpP complex. Forms a hexameric ring that, in the presence of ATP, binds to fourteen ClpP subunits assembled into a disk-like structure with a central cavity, resembling the structure of eukaryotic proteasomes.

ATP-dependent specificity component of the Clp protease. It directs the protease to specific substrates. Can perform chaperone functions in the absence of ClpP. The protein is ATP-dependent Clp protease ATP-binding subunit ClpX of Helicobacter hepaticus (strain ATCC 51449 / 3B1).